Consider the following 940-residue polypeptide: Coatomer subunit beta (940 aa).

HEAT repeat units lie at residues 11-48 (FLEA…NGDS), 90-125 (QEMI…KEPE), 126-162 (LLDP…VSNH), and 310-347 (SILE…SRNV).

As to quaternary structure, oligomeric complex that consists of at least the alpha, beta, beta', gamma, delta, epsilon and zeta subunits.

It is found in the cytoplasm. Its subcellular location is the golgi apparatus membrane. The protein resides in the cytoplasmic vesicle. It localises to the COPI-coated vesicle membrane. In terms of biological role, the coatomer is a cytosolic protein complex that binds to dilysine motifs and reversibly associates with Golgi non-clathrin-coated vesicles, which further mediate biosynthetic protein transport from the ER, via the Golgi up to the trans Golgi network. Coatomer complex is required for budding from Golgi membranes, and is essential for the retrograde Golgi-to-ER transport of dilysine-tagged proteins. The sequence is that of Coatomer subunit beta (sec26) from Schizosaccharomyces pombe (strain 972 / ATCC 24843) (Fission yeast).